Reading from the N-terminus, the 308-residue chain is Ribonuclease Z (308 aa).

His63, His65, Asp67, His68, His141, Asp212, and His270 together coordinate Zn(2+). The Proton acceptor role is filled by Asp67.

The protein belongs to the RNase Z family. As to quaternary structure, homodimer. Zn(2+) serves as cofactor.

The enzyme catalyses Endonucleolytic cleavage of RNA, removing extra 3' nucleotides from tRNA precursor, generating 3' termini of tRNAs. A 3'-hydroxy group is left at the tRNA terminus and a 5'-phosphoryl group is left at the trailer molecule.. In terms of biological role, zinc phosphodiesterase, which displays some tRNA 3'-processing endonuclease activity. Probably involved in tRNA maturation, by removing a 3'-trailer from precursor tRNA. The sequence is that of Ribonuclease Z from Pediococcus pentosaceus (strain ATCC 25745 / CCUG 21536 / LMG 10740 / 183-1w).